Reading from the N-terminus, the 233-residue chain is Pirin-like protein YhaK (233 aa).

Belongs to the pirin family. In terms of assembly, monomer.

The protein localises to the cytoplasm. Functionally, does not have quercetin 2,3-dioxygenase activity. This chain is Pirin-like protein YhaK (yhaK), found in Escherichia coli (strain K12).